The sequence spans 263 residues: HTH-type transcriptional repressor NanR (263 aa).

The disordered stretch occupies residues Met-1 to Asn-21. The HTH gntR-type domain maps to Lys-30–Pro-98. A DNA-binding region (H-T-H motif) is located at residues Glu-58–Ala-77.

Belongs to the NanR family.

Transcriptional repressor that controls expression of the genes required for the catabolism of sialic acids. This Escherichia coli O7:K1 (strain IAI39 / ExPEC) protein is HTH-type transcriptional repressor NanR.